A 622-amino-acid polypeptide reads, in one-letter code: Probable potassium transport system protein Kup (622 aa).

Helical transmembrane passes span 8–28 (LAVL…TSVL), 50–70 (ILSI…VSLV), 101–121 (VLLL…VITP), 137–157 (PTFT…LFAM), 165–185 (IGKF…LLGV), 213–233 (ITFI…ALYA), 247–267 (WFSV…ALLL), 285–305 (ALIP…QALI), 337–357 (IYMP…VVMF), 366–386 (AYGI…FYVI), 393–413 (PLAL…AFFA), and 419–439 (LFAG…LMIT).

Belongs to the HAK/KUP transporter (TC 2.A.72) family.

It localises to the cell inner membrane. It catalyses the reaction K(+)(in) + H(+)(in) = K(+)(out) + H(+)(out). Transport of potassium into the cell. Likely operates as a K(+):H(+) symporter. The sequence is that of Probable potassium transport system protein Kup from Polaromonas naphthalenivorans (strain CJ2).